The chain runs to 619 residues: ATP-dependent zinc metalloprotease FtsH (619 aa).

Topologically, residues 1 to 11 (MSNTDPQPPQK) are cytoplasmic. The chain crosses the membrane as a helical span at residues 12–32 (LPLNWVVWTLAVALMLYYLPA). Over 33-120 (MRDRPEPAIK…EVKEGHDASS (88 aa)) the chain is Periplasmic. The chain crosses the membrane as a helical span at residues 121 to 141 (SKVILLSYLPWIMFMIILFWL). Over 142 to 619 (SRRTFRNFSG…IDECLQTGAS (478 aa)) the chain is Cytoplasmic. 216-223 (GPPGTGKT) serves as a coordination point for ATP. H437 serves as a coordination point for Zn(2+). E438 is an active-site residue. The Zn(2+) site is built by H441 and D513.

The protein in the central section; belongs to the AAA ATPase family. It in the C-terminal section; belongs to the peptidase M41 family. In terms of assembly, homohexamer. Zn(2+) serves as cofactor.

The protein localises to the cell inner membrane. In terms of biological role, acts as a processive, ATP-dependent zinc metallopeptidase for both cytoplasmic and membrane proteins. Plays a role in the quality control of integral membrane proteins. This is ATP-dependent zinc metalloprotease FtsH from Hahella chejuensis (strain KCTC 2396).